Reading from the N-terminus, the 288-residue chain is NAD kinase (288 aa).

D70 functions as the Proton acceptor in the catalytic mechanism. Residues 70 to 71 (DG), 144 to 145 (ND), R155, K172, D174, 185 to 190 (TGYSLS), and Q245 each bind NAD(+).

Belongs to the NAD kinase family. A divalent metal cation is required as a cofactor.

It is found in the cytoplasm. The enzyme catalyses NAD(+) + ATP = ADP + NADP(+) + H(+). In terms of biological role, involved in the regulation of the intracellular balance of NAD and NADP, and is a key enzyme in the biosynthesis of NADP. Catalyzes specifically the phosphorylation on 2'-hydroxyl of the adenosine moiety of NAD to yield NADP. The sequence is that of NAD kinase from Citrifermentans bemidjiense (strain ATCC BAA-1014 / DSM 16622 / JCM 12645 / Bem) (Geobacter bemidjiensis).